The chain runs to 446 residues: Adenylosuccinate synthetase (446 aa).

GTP is bound by residues 20–26 (GDEGKGK) and 48–50 (GHT). D21 serves as the catalytic Proton acceptor. Residues D21 and G48 each contribute to the Mg(2+) site. IMP-binding positions include 21–24 (DEGK), 46–49 (NAGH), T137, R151, Q232, T247, and R319. H49 acts as the Proton donor in catalysis. 315–321 (SVTGRPR) contributes to the substrate binding site. Residues R321, 347–349 (KLD), and 429–431 (STG) contribute to the GTP site.

This sequence belongs to the adenylosuccinate synthetase family. As to quaternary structure, homodimer. The cofactor is Mg(2+).

It is found in the cytoplasm. It carries out the reaction IMP + L-aspartate + GTP = N(6)-(1,2-dicarboxyethyl)-AMP + GDP + phosphate + 2 H(+). It functions in the pathway purine metabolism; AMP biosynthesis via de novo pathway; AMP from IMP: step 1/2. Plays an important role in the de novo pathway of purine nucleotide biosynthesis. Catalyzes the first committed step in the biosynthesis of AMP from IMP. In Ralstonia nicotianae (strain ATCC BAA-1114 / GMI1000) (Ralstonia solanacearum), this protein is Adenylosuccinate synthetase.